The chain runs to 439 residues: Glutamine synthetase (439 aa).

The region spanning S12–K93 is the GS beta-grasp domain. Residues P99–L439 form the GS catalytic domain. 2 residues coordinate Mg(2+): E122 and E124. E172 serves as a coordination point for ATP. 2 residues coordinate Mg(2+): E177 and E184. An L-glutamate-binding site is contributed by G229. H233 contacts Mg(2+). Residues H235–S237 and S237 contribute to the ATP site. The L-glutamate site is built by R283, E289, and R301. Residues R301, R306, and K313 each coordinate ATP. Residue E318 participates in Mg(2+) binding. R320 lines the L-glutamate pocket.

This sequence belongs to the glutamine synthetase family. As to quaternary structure, oligomer of 12 subunits arranged in the form of two hexagons. Mg(2+) serves as cofactor.

It localises to the cytoplasm. It catalyses the reaction L-glutamate + NH4(+) + ATP = L-glutamine + ADP + phosphate + H(+). Functionally, probably involved in nitrogen metabolism via ammonium assimilation. Catalyzes the ATP-dependent biosynthesis of glutamine from glutamate and ammonia. The protein is Glutamine synthetase of Pyrococcus furiosus (strain ATCC 43587 / DSM 3638 / JCM 8422 / Vc1).